A 349-amino-acid polypeptide reads, in one-letter code: Protein RecA (349 aa).

65 to 72 (GPESSGKT) contributes to the ATP binding site.

It belongs to the RecA family.

It localises to the cytoplasm. Functionally, can catalyze the hydrolysis of ATP in the presence of single-stranded DNA, the ATP-dependent uptake of single-stranded DNA by duplex DNA, and the ATP-dependent hybridization of homologous single-stranded DNAs. It interacts with LexA causing its activation and leading to its autocatalytic cleavage. The polypeptide is Protein RecA (Azotobacter vinelandii (strain DJ / ATCC BAA-1303)).